Reading from the N-terminus, the 178-residue chain is Ribosome maturation factor RimM (178 aa).

Residues 101-178 (EGEFYWYQLQ…EMRVDWDADF (78 aa)) form the PRC barrel domain.

This sequence belongs to the RimM family. As to quaternary structure, binds ribosomal protein uS19.

Its subcellular location is the cytoplasm. Functionally, an accessory protein needed during the final step in the assembly of 30S ribosomal subunit, possibly for assembly of the head region. Essential for efficient processing of 16S rRNA. May be needed both before and after RbfA during the maturation of 16S rRNA. It has affinity for free ribosomal 30S subunits but not for 70S ribosomes. In Ectopseudomonas mendocina (strain ymp) (Pseudomonas mendocina), this protein is Ribosome maturation factor RimM.